Reading from the N-terminus, the 290-residue chain is Ribosomal protein L11 methyltransferase (290 aa).

S-adenosyl-L-methionine-binding residues include threonine 135, glycine 158, aspartate 180, and asparagine 227.

The protein belongs to the methyltransferase superfamily. PrmA family.

The protein localises to the cytoplasm. It carries out the reaction L-lysyl-[protein] + 3 S-adenosyl-L-methionine = N(6),N(6),N(6)-trimethyl-L-lysyl-[protein] + 3 S-adenosyl-L-homocysteine + 3 H(+). Methylates ribosomal protein L11. The protein is Ribosomal protein L11 methyltransferase of Mesorhizobium japonicum (strain LMG 29417 / CECT 9101 / MAFF 303099) (Mesorhizobium loti (strain MAFF 303099)).